A 443-amino-acid chain; its full sequence is Threonine/serine transporter TdcC (443 aa).

The next 11 membrane-spanning stretches (helical) occupy residues 22–42 (TTWTLGLFGTAIGAGVLFFPI), 44–64 (AGFGGLIPILLMLVLAYPIAF), 97–117 (GVVITFLYFFAICPLLWIYGV), 140–160 (FVALFLLLLMAFVIWFGKDLM), 163–183 (VMSYLVWPFIASLVLISLSLI), 207–227 (ILVTVWLGISIMVFSFNFSPI), 259–279 (ASMLMVAVVMFFAFSCLFTLS), 319–339 (ASIIALVAIFKSFFGHYLGTL), 366–386 (ISMIFIMGSTWVVAYANPNIL), 389–409 (IEAMGAPIIASLLCLLPMYAI), and 423–443 (DNVFVTLIGLLTILNIVYKLF).

Belongs to the amino acid/polyamine transporter 2 family. SdaC/TdcC subfamily.

The protein localises to the cell inner membrane. It catalyses the reaction L-threonine(in) + H(+)(in) = L-threonine(out) + H(+)(out). The enzyme catalyses L-serine(in) + H(+)(in) = L-serine(out) + H(+)(out). Its function is as follows. Involved in the import of threonine and serine into the cell, with the concomitant import of a proton (symport system). The polypeptide is Threonine/serine transporter TdcC (Salmonella paratyphi A (strain ATCC 9150 / SARB42)).